The following is a 220-amino-acid chain: Ribosome biogenesis protein 15 (220 aa).

A disordered region spans residues 1-82 (MVKSTSKTST…KQANEKKSKD (82 aa)). Basic and acidic residues predominate over residues 9–30 (STKETVTKQPTEEKPIQEKEEL). Over residues 39–60 (SDEEDEKDEDEIEGLAASDDEQ) the composition is skewed to acidic residues. One can recognise an RRM domain in the interval 91–169 (GIIYVSRLPH…HLLQVRVLPK (79 aa)).

As to quaternary structure, component of the pre-66S ribosomal particle. Interacts with NOP7 and RRP1.

The protein localises to the cytoplasm. It localises to the nucleus. The protein resides in the nucleolus. Involved in the biogenesis of the 60S ribosomal subunit. Required for pre-rRNA processing and cytokinesis. Associates with the precursors of the 25S and 5.8S rRNAs. The protein is Ribosome biogenesis protein 15 of Saccharomyces cerevisiae (strain ATCC 204508 / S288c) (Baker's yeast).